The following is a 365-amino-acid chain: Putative fatty acid elongase 2 (365 aa).

Residues 1-68 (MPDSPTLHHN…SFEFIVNKTR (68 aa)) are Lumenal-facing. N-linked (GlcNAc...) asparagine glycans are attached at residues asparagine 17 and asparagine 65. Residues 69–89 (FSSAPVVATIIISYYLLILVG) traverse the membrane as a helical segment. Topologically, residues 90-111 (GRIMRNRQPIRLQKIFQYYNLT) are cytoplasmic. Residues 112 to 132 (FSIASAILALLIFEQVAPAIY) traverse the membrane as a helical segment. Topologically, residues 133–149 (KHGFFFSICNEKAWTQP) are lumenal. A helical transmembrane segment spans residues 150 to 170 (LVFLYYCAYISKFLELTDTFF). Residues 171–179 (LVLRKKPLQ) lie on the Cytoplasmic side of the membrane. Residues 180–198 (FLHCYHHGATAVLVYTQIV) form a helical membrane-spanning segment. Residues 199–204 (GRTSIS) lie on the Lumenal side of the membrane. Residues 205-225 (WLIIEINLLVHVTMYYYYYLV) traverse the membrane as a helical segment. Residues 226 to 241 (AKGIRVPWKKWVTRFQ) lie on the Cytoplasmic side of the membrane. A helical membrane pass occupies residues 242–262 (IVQFFADLGFIYFAVYTEVAY). The Lumenal segment spans residues 263 to 278 (RLKFYKACMGHCSGHP). A helical membrane pass occupies residues 279–299 (LAAFCGLATISSYLVLFIVFY). The Cytoplasmic portion of the chain corresponds to 300–365 (HNTYKKNAAL…PISSGLNNEK (66 aa)).

This sequence belongs to the ELO family.

It is found in the endoplasmic reticulum membrane. The enzyme catalyses a very-long-chain acyl-CoA + malonyl-CoA + H(+) = a very-long-chain 3-oxoacyl-CoA + CO2 + CoA. Its function is as follows. May be involved in the synthesis of very long chain fatty acids. In Schizosaccharomyces pombe (strain 972 / ATCC 24843) (Fission yeast), this protein is Putative fatty acid elongase 2.